The following is a 351-amino-acid chain: Selenide, water dikinase (351 aa).

The active site involves C20. Residues K23 and 51–53 (TKD) each bind ATP. Residue D54 coordinates Mg(2+). ATP is bound by residues D71, D94, and 142-144 (GHS). Position 94 (D94) interacts with Mg(2+). Position 230 (D230) interacts with Mg(2+).

Belongs to the selenophosphate synthase 1 family. Class I subfamily. Homodimer. Mg(2+) is required as a cofactor.

The catalysed reaction is hydrogenselenide + ATP + H2O = selenophosphate + AMP + phosphate + 2 H(+). Functionally, synthesizes selenophosphate from selenide and ATP. The protein is Selenide, water dikinase of Pasteurella multocida (strain Pm70).